Reading from the N-terminus, the 228-residue chain is MTEYTFDDLAVVMGTYNEEQAIGSVLADIDRITDGRAEVVCVDGSDDRTPEIARKMGARVIEQEPQGYGVAVEAAVLAPDRPVVVTTDCDDTYPMEYLPKFLDLINDGYDVVSGDRITKGAETMPRLNRAGNIAFARLASFLMGATVHDTTTGMRAYRRELLHDIEWTENTGLSAELLIRPAMRGYNIAEVPIPYRERAGETKLDPFAGGAAIGKSIVKVCLEERLRL.

Belongs to the glycosyltransferase 2 family.

In terms of biological role, glycosyltransferase that adds a monosaccharide to dolichol phosphate, thereby being responsible for generating one of the three monosaccharide-modified dolichol phosphates. The subunit onto which additional sugars are added is not known. This Haloferax volcanii (strain ATCC 29605 / DSM 3757 / JCM 8879 / NBRC 14742 / NCIMB 2012 / VKM B-1768 / DS2) (Halobacterium volcanii) protein is Dolichyl-phosphate hexose transferase HVO_1613.